The following is a 179-amino-acid chain: Large ribosomal subunit protein uL5 (179 aa).

Belongs to the universal ribosomal protein uL5 family. As to quaternary structure, part of the 50S ribosomal subunit; part of the 5S rRNA/L5/L18/L25 subcomplex. Contacts the 5S rRNA and the P site tRNA. Forms a bridge to the 30S subunit in the 70S ribosome.

Functionally, this is one of the proteins that bind and probably mediate the attachment of the 5S RNA into the large ribosomal subunit, where it forms part of the central protuberance. In the 70S ribosome it contacts protein S13 of the 30S subunit (bridge B1b), connecting the 2 subunits; this bridge is implicated in subunit movement. Contacts the P site tRNA; the 5S rRNA and some of its associated proteins might help stabilize positioning of ribosome-bound tRNAs. The protein is Large ribosomal subunit protein uL5 of Burkholderia cenocepacia (strain HI2424).